Consider the following 403-residue polypeptide: Soluble calcium-activated nucleotidase 1 (403 aa).

The Cytoplasmic segment spans residues 1–44 (MPIQPFDQREWNEPMHSLRISVGGLPVLASMTKATDPRFRPRWR). The helical; Signal-anchor for type II membrane protein transmembrane segment at 45 to 61 (VILTSFVGAALLWLLYS) threads the bilayer. The Lumenal segment spans residues 62–403 (HHQGPVPGRP…TVKYEGIEFI (342 aa)). N-linked (GlcNAc...) asparagine glycosylation is present at Asn-90. Ca(2+) is bound by residues Ser-170, Asp-171, Glu-217, Glu-286, Ser-347, and Glu-398.

The protein belongs to the apyrase family. As to quaternary structure, monomer. Homodimer; dimerization is Ca(2+)-dependent. It depends on Ca(2+) as a cofactor.

It localises to the endoplasmic reticulum membrane. It is found in the golgi apparatus. Its subcellular location is the golgi stack membrane. The catalysed reaction is a ribonucleoside 5'-diphosphate + H2O = a ribonucleoside 5'-phosphate + phosphate + H(+). Functionally, calcium-dependent nucleotidase with a preference for UDP. The order of activity with different substrates is UDP &gt; GDP &gt; IDP &gt;&gt; UTP &gt; CDP = GTP = ITP. Has very low activity towards ADP and even lower activity towards ATP. Does not hydrolyze AMP and GMP. Involved in proteoglycan synthesis. This is Soluble calcium-activated nucleotidase 1 (Cant1) from Mus musculus (Mouse).